A 1073-amino-acid polypeptide reads, in one-letter code: Probable lipase MIL1 (1073 aa).

Disordered stretches follow at residues 1–151 (MSDS…AVSS) and 163–190 (LTSK…KSVN). Composition is skewed to basic and acidic residues over residues 54 to 81 (QAKE…EAGK) and 101 to 121 (GIDR…HDTD). An APM2-interacting WQEMP motif motif is present at residues 143 to 147 (WQEMP). N-linked (GlcNAc...) asparagine glycans are attached at residues N190, N229, and N236. The interval 230–267 (SSQTSVNLTSSPSTTSLNNEKNNDDDDDDSYDEYEDDV) is disordered. Low complexity predominate over residues 233–249 (TSVNLTSSPSTTSLNNE). The segment covering 252–267 (NDDDDDDSYDEYEDDV) has biased composition (acidic residues). An N-linked (GlcNAc...) asparagine glycan is attached at N280. The helical transmembrane segment at 292 to 312 (FAYVGAINILANQMCTNLATL) threads the bilayer. The interval 385-448 (NPWENDRDHE…SDVPGKVLDP (64 aa)) is disordered. Residues 404–427 (RMSPNEQNGSVQASTPDPEQSATP) show a composition bias toward polar residues. A glycan (N-linked (GlcNAc...) asparagine) is linked at N411. A Phosphoserine modification is found at S435. Residues 457–477 (LNIDVAWTIICDLFLICLQSS) traverse the membrane as a helical segment. A glycan (N-linked (GlcNAc...) asparagine) is linked at N495. Transmembrane regions (helical) follow at residues 553–573 (LVLG…IAAG) and 577–597 (IGIT…VVAV). N726 carries N-linked (GlcNAc...) asparagine glycosylation. A helical membrane pass occupies residues 818–838 (WFLAYLFRAAAGGFSAVMGIS). Residue N850 is glycosylated (N-linked (GlcNAc...) asparagine). Disordered stretches follow at residues 942 to 968 (GRDM…EGIA) and 1010 to 1073 (KEVE…PDDI). The segment covering 1027–1037 (PSTPKINPPQS) has biased composition (pro residues). The residue at position 1037 (S1037) is a Phosphoserine.

Belongs to the TMCO4 family. Interacts with RPP0. Interacts with APM2.

The protein localises to the golgi apparatus membrane. The protein resides in the early endosome membrane. Its subcellular location is the cytoplasmic vesicle. It localises to the clathrin-coated vesicle membrane. Functionally, probable lipase that recruits the AP-1-related (AP-1R) complex to membranes via interaction with APM2. The AP-1R complex is an adapter protein complex that mediates of cargo protein SNC1 sorting in clathrin-coated vesicles. The sequence is that of Probable lipase MIL1 from Saccharomyces cerevisiae (strain ATCC 204508 / S288c) (Baker's yeast).